The primary structure comprises 451 residues: Pre-mRNA-splicing factor PRP46 (451 aa).

WD repeat units follow at residues 137–168 (GHLG…KVWD), 180–210 (GHVM…KCWD), 222–252 (GHLS…KLWD), 264–294 (GHKG…RLWD), 306–335 (HHKR…RSWG), 348–377 (EKTG…SFYD), and 397–427 (EGER…KIWK).

This sequence belongs to the WD repeat PRL1/PRL2 family. In terms of assembly, belongs to the CWC complex (or CEF1-associated complex), a spliceosome subcomplex composed of the U2, U5 and U6 snRNAs and at least BUD13, BUD31, BRR2, CDC40, CEF1, CLF1, CUS1, CWC2, CWC15, CWC21, CWC22, CWC23, CWC24, CWC25, CWC27, ECM2, HSH155, IST3, ISY1, LEA1, MSL1, NTC20, PRP8, PRP9, PRP11, PRP19, PRP21, PRP22, PRP45, PRP46, SLU7, SMB1, SMD1, SMD2, SMD3, SMX2, SMX3, SNT309, SNU114, SPP2, SYF1, SYF2, RSE1 and YJU2. Interacts with CEF1, CLF1, NTC20, PRP45 and SYF1.

The protein localises to the cytoplasm. It is found in the nucleus. Involved in pre-mRNA splicing. May also be required for cell cycle progression at G2/M. This is Pre-mRNA-splicing factor PRP46 (PRP46) from Saccharomyces cerevisiae (strain ATCC 204508 / S288c) (Baker's yeast).